The primary structure comprises 183 residues: UPF0397 protein VSAL_I1988 (183 aa).

The next 5 helical transmembrane spans lie at 8–28, 41–61, 74–94, 110–130, and 147–167; these read VVVI…MFGI, AVLA…VGFI, VWLT…LFPI, FFIF…TSAF, and LCII…FILT.

It belongs to the UPF0397 family.

Its subcellular location is the cell membrane. The protein is UPF0397 protein VSAL_I1988 of Aliivibrio salmonicida (strain LFI1238) (Vibrio salmonicida (strain LFI1238)).